Reading from the N-terminus, the 189-residue chain is MQKIALCITGASGVIYGIKLLQVLEELDFSVDLVISRNAKVVLKEEHSLTFEEVLKGLKNVRIHEENDFTSPLASGSRLVHYRGVYVVPCSTNTLSCIANGINKNLIHRVGEVALKERVPLVLLVREAPYNEIHLENMLKITRMGGVVVPASPAFYHKPQSIDDMINFVVGKLLDVLRIEHNLYKRWRG.

Residues 10–12 (GAS), serine 36, 91–94 (STNT), and arginine 126 contribute to the FMN site. Residues tyrosine 156 and lysine 172 each contribute to the dimethylallyl phosphate site.

Belongs to the UbiX/PAD1 family.

The catalysed reaction is dimethylallyl phosphate + FMNH2 = prenylated FMNH2 + phosphate. Flavin prenyltransferase that catalyzes the synthesis of the prenylated FMN cofactor (prenyl-FMN) for 4-hydroxy-3-polyprenylbenzoic acid decarboxylase UbiD. The prenyltransferase is metal-independent and links a dimethylallyl moiety from dimethylallyl monophosphate (DMAP) to the flavin N5 and C6 atoms of FMN. This is Flavin prenyltransferase UbiX from Aquifex aeolicus (strain VF5).